The sequence spans 189 residues: Ribonuclease M5 2 (189 aa).

The region spanning 8 to 91 (SQVIVAEGRD…VFLKRDEAVP (84 aa)) is the Toprim domain. Mg(2+) is bound by residues glutamate 14, aspartate 60, and aspartate 62.

This sequence belongs to the ribonuclease M5 family. The cofactor is Mg(2+).

Its subcellular location is the cytoplasm. The catalysed reaction is Endonucleolytic cleavage of RNA, removing 21 and 42 nucleotides, respectively, from the 5'- and 3'-termini of a 5S-rRNA precursor.. Its function is as follows. Required for correct processing of both the 5' and 3' ends of 5S rRNA precursor. Cleaves both sides of a double-stranded region yielding mature 5S rRNA in one step. The protein is Ribonuclease M5 2 of Ligilactobacillus salivarius (strain UCC118) (Lactobacillus salivarius).